The sequence spans 729 residues: Fatty acid oxidation complex subunit alpha (729 aa).

An enoyl-CoA hydratase/isomerase region spans residues 1–189; that stretch reads MLYKGDTLYL…KIGLVDGVVK (189 aa). Residue Asp296 coordinates substrate. Residues 311–729 form a 3-hydroxyacyl-CoA dehydrogenase region; it reads ETPKQAAVLG…ARPVGSLKTA (419 aa). NAD(+) is bound by residues Met324, Asp343, 400–402, Lys407, and Ser429; that span reads VVE. Catalysis depends on His450, which acts as the For 3-hydroxyacyl-CoA dehydrogenase activity. Asn453 lines the NAD(+) pocket. 2 residues coordinate substrate: Asn500 and Tyr660. Residues 708–729 are disordered; it reads RHNEPYYPPVEPARPVGSLKTA.

In the N-terminal section; belongs to the enoyl-CoA hydratase/isomerase family. This sequence in the C-terminal section; belongs to the 3-hydroxyacyl-CoA dehydrogenase family. As to quaternary structure, heterotetramer of two alpha chains (FadB) and two beta chains (FadA).

The enzyme catalyses a (3S)-3-hydroxyacyl-CoA + NAD(+) = a 3-oxoacyl-CoA + NADH + H(+). It carries out the reaction a (3S)-3-hydroxyacyl-CoA = a (2E)-enoyl-CoA + H2O. The catalysed reaction is a 4-saturated-(3S)-3-hydroxyacyl-CoA = a (3E)-enoyl-CoA + H2O. It catalyses the reaction (3S)-3-hydroxybutanoyl-CoA = (3R)-3-hydroxybutanoyl-CoA. The enzyme catalyses a (3Z)-enoyl-CoA = a 4-saturated (2E)-enoyl-CoA. It carries out the reaction a (3E)-enoyl-CoA = a 4-saturated (2E)-enoyl-CoA. It participates in lipid metabolism; fatty acid beta-oxidation. Its function is as follows. Involved in the aerobic and anaerobic degradation of long-chain fatty acids via beta-oxidation cycle. Catalyzes the formation of 3-oxoacyl-CoA from enoyl-CoA via L-3-hydroxyacyl-CoA. It can also use D-3-hydroxyacyl-CoA and cis-3-enoyl-CoA as substrate. The protein is Fatty acid oxidation complex subunit alpha of Salmonella choleraesuis (strain SC-B67).